The following is a 707-amino-acid chain: E3 ubiquitin-protein ligase MARCHF7 (707 aa).

Methionine 1 bears the N-acetylmethionine mark. 5 disordered regions span residues 1–126, 157–279, 294–343, 361–425, and 444–473; these read MESK…QVPR, LMDY…RRTT, FFSR…RASE, SHNH…HIFR, and AANR…GRNT. Residues 17–33 show a composition bias toward low complexity; the sequence is SSSLSARMMSGSRGSSL. A compositionally biased stretch (basic and acidic residues) spans 37-48; it reads YHSRDSSFRLDS. The span at 52-65 shows a compositional bias: low complexity; the sequence is STSASASASPFQSA. Polar residues-rich tracts occupy residues 66-83, 95-126, 189-212, and 254-270; these read WYSE…SQNQ, SCTN…QVPR, NSMS…HQTI, and ISNS…FQES. Over residues 294-303 the composition is skewed to low complexity; sequence FFSRRSSQDS. 3 stretches are compositionally biased toward polar residues: residues 304-336, 373-392, and 412-421; these read LNTR…TSEV, FNQE…SLRN, and IPTSDTSSRS. Serine 317 and serine 389 each carry phosphoserine. Positions 444–470 are enriched in low complexity; the sequence is AANRPQASAASSSATTGGSTSDSAQGG. The segment at 544–614 adopts an RING-CH-type zinc-finger fold; it reads SEEEEGDLCR…ELCKEKLELN (71 aa). Residues cysteine 552, cysteine 555, cysteine 570, cysteine 572, histidine 580, cysteine 583, cysteine 604, and cysteine 607 each contribute to the Zn(2+) site. Threonine 686 is modified (phosphothreonine). Phosphoserine is present on residues serine 687 and serine 691.

It is found in the cytoplasm. It catalyses the reaction S-ubiquitinyl-[E2 ubiquitin-conjugating enzyme]-L-cysteine + [acceptor protein]-L-lysine = [E2 ubiquitin-conjugating enzyme]-L-cysteine + N(6)-ubiquitinyl-[acceptor protein]-L-lysine.. It functions in the pathway protein modification; protein ubiquitination. Functionally, E3 ubiquitin-protein ligase which may specifically enhance the E2 activity of HIP2. E3 ubiquitin ligases accept ubiquitin from an E2 ubiquitin-conjugating enzyme in the form of a thioester and then directly transfer the ubiquitin to targeted substrates. May be involved in T-cell proliferation by regulating LIF secretion. May play a role in lysosome homeostasis. Promotes 'Lys-6', 'Lys-11' and 'Lys-63'-linked mixed polyubiquitination on ATG14 leading to the inhibition of autophagy by impairing the interaction between ATG14 and STX7. Participates in the dopamine-mediated negative regulation of the NLRP3 inflammasome by promoting its uibiquitination and subsequent degradation. The protein is E3 ubiquitin-protein ligase MARCHF7 (MARCHF7) of Pongo abelii (Sumatran orangutan).